The primary structure comprises 443 residues: Ribitol-5-phosphate xylosyltransferase 1 (443 aa).

Residues 1–9 (MRLTRKRLC) are Cytoplasmic-facing. A helical; Signal-anchor for type II membrane protein transmembrane segment spans residues 10-30 (SFLIALYCLFSLYAAYHVFFG). Over 31–443 (RRRQAPAGSP…ESSFLMNNKS (413 aa)) the chain is Extracellular. The interval 35 to 76 (APAGSPRGLRKGAAPARERRGREQSTLESEEWNPWEGDEKNE) is disordered. Residues 50 to 59 (ARERRGREQS) are compositionally biased toward basic and acidic residues.

Belongs to the RXYLT1 family. As to quaternary structure, forms a complex composed of FKTN/fukutin, FKRP and RXYLT1/TMEM5.

The protein localises to the golgi apparatus membrane. It catalyses the reaction 3-O-[Rib-ol-P-Rib-ol-P-3-beta-D-GalNAc-(1-&gt;3)-beta-D-GlcNAc-(1-&gt;4)-(O-6-P-alpha-D-Man)]-Thr-[protein] + UDP-alpha-D-xylose = 3-O-[beta-D-Xyl-(1-&gt;4)-Rib-ol-P-Rib-ol-P-3-beta-D-GalNAc-(1-&gt;3)-beta-D-GlcNAc-(1-&gt;4)-(O-6-P-alpha-D-Man)]-Thr-[protein] + UDP + H(+). Its pathway is protein modification; protein glycosylation. Acts as a UDP-D-xylose:ribitol-5-phosphate beta1,4-xylosyltransferase, which catalyzes the transfer of UDP-D-xylose to ribitol 5-phosphate (Rbo5P) to form the Xylbeta1-4Rbo5P linkage on O-mannosyl glycan. Participates in the biosynthesis of the phosphorylated O-mannosyl trisaccharide (N-acetylgalactosamine-beta-3-N-acetylglucosamine-beta-4-(phosphate-6-)mannose), a carbohydrate structure present in alpha-dystroglycan (DAG1), which is required for binding laminin G-like domain-containing extracellular proteins with high affinity. This Homo sapiens (Human) protein is Ribitol-5-phosphate xylosyltransferase 1.